We begin with the raw amino-acid sequence, 589 residues long: Kelch-like protein 25 (589 aa).

The 69-residue stretch at 46-114 (TDVTLWAGNR…AYSSKIIINE (69 aa)) folds into the BTB domain. The BACK domain maps to 149-250 (CLGMMILSDA…LPSELLKEAV (102 aa)). 6 Kelch repeats span residues 296–340 (TLLI…AIGC), 341–388 (KVYV…ELEN), 389–444 (CLYV…SAKL), 446–492 (LFAF…VLGS), 493–538 (QIFI…ASGN), and 539–585 (KVYV…STWK).

Component of the BCR(KLHL25) E3 ubiquitin ligase complex, at least composed of cul3, klhl25 and rbx1.

It functions in the pathway protein modification; protein ubiquitination. In terms of biological role, substrate-specific adapter of a BCR (BTB-CUL3-RBX1) E3 ubiquitin ligase complex involved in various processes, such as translation homeostasis and lipid synthesis. The BCR(KLHL25) ubiquitin ligase complex acts by mediating ubiquitination of hypophosphorylated eif4ebp1 (4E-BP1): ubiquitination and subsequent degradation of hypophosphorylated EIF4EBP1 (4E-BP1) probably serves as a homeostatic mechanism to maintain translation and prevent eIF4E inhibition when eIF4E levels are low. The BCR(KLHL25) complex also acts as a regulator of lipid synthesis by mediating ubiquitination and degradation of ACLY, thereby inhibiting lipid synthesis. The sequence is that of Kelch-like protein 25 from Xenopus tropicalis (Western clawed frog).